A 212-amino-acid polypeptide reads, in one-letter code: Large ribosomal subunit protein uL3 (212 aa).

Residues 133-152 (RGSMGHGSKYHRRPGSLGAK) are disordered.

This sequence belongs to the universal ribosomal protein uL3 family. As to quaternary structure, part of the 50S ribosomal subunit. Forms a cluster with proteins L14 and L19.

Functionally, one of the primary rRNA binding proteins, it binds directly near the 3'-end of the 23S rRNA, where it nucleates assembly of the 50S subunit. This chain is Large ribosomal subunit protein uL3, found in Syntrophomonas wolfei subsp. wolfei (strain DSM 2245B / Goettingen).